Here is a 117-residue protein sequence, read N- to C-terminus: Large ribosomal subunit protein bL19 (117 aa).

The protein belongs to the bacterial ribosomal protein bL19 family.

Its function is as follows. This protein is located at the 30S-50S ribosomal subunit interface and may play a role in the structure and function of the aminoacyl-tRNA binding site. The chain is Large ribosomal subunit protein bL19 from Sorangium cellulosum (strain So ce56) (Polyangium cellulosum (strain So ce56)).